Consider the following 990-residue polypeptide: Bifunctional glutamine synthetase adenylyltransferase/adenylyl-removing enzyme (990 aa).

The interval 1-474 is adenylyl removase; that stretch reads MIFSAITADL…HYAKLFEGDP (474 aa). The segment at 478–990 is adenylyl transferase; sequence AKLPPVDYGA…FSRLIGGEDA (513 aa).

It belongs to the GlnE family. Mg(2+) is required as a cofactor.

It carries out the reaction [glutamine synthetase]-O(4)-(5'-adenylyl)-L-tyrosine + phosphate = [glutamine synthetase]-L-tyrosine + ADP. The enzyme catalyses [glutamine synthetase]-L-tyrosine + ATP = [glutamine synthetase]-O(4)-(5'-adenylyl)-L-tyrosine + diphosphate. Involved in the regulation of glutamine synthetase GlnA, a key enzyme in the process to assimilate ammonia. When cellular nitrogen levels are high, the C-terminal adenylyl transferase (AT) inactivates GlnA by covalent transfer of an adenylyl group from ATP to specific tyrosine residue of GlnA, thus reducing its activity. Conversely, when nitrogen levels are low, the N-terminal adenylyl removase (AR) activates GlnA by removing the adenylyl group by phosphorolysis, increasing its activity. The regulatory region of GlnE binds the signal transduction protein PII (GlnB) which indicates the nitrogen status of the cell. The sequence is that of Bifunctional glutamine synthetase adenylyltransferase/adenylyl-removing enzyme from Rhodopseudomonas palustris (strain ATCC BAA-98 / CGA009).